We begin with the raw amino-acid sequence, 64 residues long: Large ribosomal subunit protein bL28 (64 aa).

This sequence belongs to the bacterial ribosomal protein bL28 family.

This is Large ribosomal subunit protein bL28 from Persephonella marina (strain DSM 14350 / EX-H1).